Consider the following 364-residue polypeptide: S-adenosylmethionine:tRNA ribosyltransferase-isomerase (364 aa).

Belongs to the QueA family. In terms of assembly, monomer.

The protein localises to the cytoplasm. It catalyses the reaction 7-aminomethyl-7-carbaguanosine(34) in tRNA + S-adenosyl-L-methionine = epoxyqueuosine(34) in tRNA + adenine + L-methionine + 2 H(+). It functions in the pathway tRNA modification; tRNA-queuosine biosynthesis. In terms of biological role, transfers and isomerizes the ribose moiety from AdoMet to the 7-aminomethyl group of 7-deazaguanine (preQ1-tRNA) to give epoxyqueuosine (oQ-tRNA). The sequence is that of S-adenosylmethionine:tRNA ribosyltransferase-isomerase from Bradyrhizobium sp. (strain BTAi1 / ATCC BAA-1182).